We begin with the raw amino-acid sequence, 369 residues long: Guanine nucleotide-binding protein subunit beta-2 (369 aa).

Positions 1-24 (MSTIAGESSSSSKMPENSQPTTTE) are enriched in polar residues. Residues 1–28 (MSTIAGESSSSSKMPENSQPTTTEKGSE) form a disordered region. WD repeat units lie at residues 79-109 (GHVGKVLCMDWSLDKRHIVSSSQDGKVIVWD), 121-151 (MPTTWVMACAFSPSSQMIACGGLDNKCSVVP), 167-197 (THTSYMSCCTFLRSDNLILTGSGDSTCAIWD), 209-241 (GHTGDVFAIDVPKCDTGNTFISAGADKHSLVWD), 253-283 (GHEADINTVRFHPNGDAFATGSDDATCRLFD), 297-327 (SILFPVNGVDFSLSGRILFAGYGDYRVGVWD), and 339-369 (GHENRISCLRTSPDGTAVCSASWDCTIRIWA).

It belongs to the WD repeat G protein beta family. G proteins are composed of 3 units, alpha, beta and gamma. Interacts with G protein gamma subunits gpc-1 and gpc-2 and with egl-10 and eat-16.

Its function is as follows. Guanine nucleotide-binding proteins (G proteins) are involved as a modulator or transducer in various transmembrane signaling systems. The beta and gamma chains are required for the GTPase activity, for replacement of GDP by GTP, and for G protein-effector interaction. Plays a role in regulating dopamine-mediated locomotion behavior. This is Guanine nucleotide-binding protein subunit beta-2 from Caenorhabditis elegans.